The chain runs to 75 residues: Small ribosomal subunit protein bS18 (75 aa).

The protein belongs to the bacterial ribosomal protein bS18 family. Part of the 30S ribosomal subunit. Forms a tight heterodimer with protein bS6.

Functionally, binds as a heterodimer with protein bS6 to the central domain of the 16S rRNA, where it helps stabilize the platform of the 30S subunit. The sequence is that of Small ribosomal subunit protein bS18 from Yersinia enterocolitica serotype O:8 / biotype 1B (strain NCTC 13174 / 8081).